The sequence spans 599 residues: Sulfite reductase [NADPH] flavoprotein alpha-component (599 aa).

The 139-residue stretch at 64–202 (ITIISASQTG…AASEWRARVV (139 aa)) folds into the Flavodoxin-like domain. FMN is bound by residues 70–75 (SQTGNA), 117–120 (STQG), and 153–162 (LGDSSYEFFC). The region spanning 234 to 448 (DAPLVASLSV…IEHNDNFRLP (215 aa)) is the FAD-binding FR-type domain. Residues Thr-322, Ala-356, 386 to 389 (RLYS), 404 to 406 (TVG), Tyr-410, and 419 to 422 (GGAS) contribute to the FAD site. NADP(+) is bound by residues 519-520 (SR), 525-529 (KVYVQ), and Asp-561. Residue Tyr-599 participates in FAD binding.

Belongs to the NADPH-dependent sulphite reductase flavoprotein subunit CysJ family. The protein in the N-terminal section; belongs to the flavodoxin family. It in the C-terminal section; belongs to the flavoprotein pyridine nucleotide cytochrome reductase family. In terms of assembly, alpha(8)-beta(8). The alpha component is a flavoprotein, the beta component is a hemoprotein. The cofactor is FAD. Requires FMN as cofactor.

The catalysed reaction is hydrogen sulfide + 3 NADP(+) + 3 H2O = sulfite + 3 NADPH + 4 H(+). It participates in sulfur metabolism; hydrogen sulfide biosynthesis; hydrogen sulfide from sulfite (NADPH route): step 1/1. Component of the sulfite reductase complex that catalyzes the 6-electron reduction of sulfite to sulfide. This is one of several activities required for the biosynthesis of L-cysteine from sulfate. The flavoprotein component catalyzes the electron flow from NADPH -&gt; FAD -&gt; FMN to the hemoprotein component. The chain is Sulfite reductase [NADPH] flavoprotein alpha-component from Shigella boydii serotype 4 (strain Sb227).